The following is a 290-amino-acid chain: Ribosomal RNA small subunit methyltransferase A (290 aa).

Residues Asn-27, Leu-29, Gly-54, Glu-75, Asp-100, and Asn-125 each contribute to the S-adenosyl-L-methionine site.

The protein belongs to the class I-like SAM-binding methyltransferase superfamily. rRNA adenine N(6)-methyltransferase family. RsmA subfamily.

Its subcellular location is the cytoplasm. The enzyme catalyses adenosine(1518)/adenosine(1519) in 16S rRNA + 4 S-adenosyl-L-methionine = N(6)-dimethyladenosine(1518)/N(6)-dimethyladenosine(1519) in 16S rRNA + 4 S-adenosyl-L-homocysteine + 4 H(+). Its function is as follows. Specifically dimethylates two adjacent adenosines (A1518 and A1519) in the loop of a conserved hairpin near the 3'-end of 16S rRNA in the 30S particle. May play a critical role in biogenesis of 30S subunits. The polypeptide is Ribosomal RNA small subunit methyltransferase A (Streptococcus pyogenes serotype M3 (strain ATCC BAA-595 / MGAS315)).